The primary structure comprises 492 residues: MTQYETVIGLEVHVQLNTKSKMFCRCSTDYTSAEPNTHVCPVCLGMPGVLPTINKQAVEYTIMSGLALGCDIASFSKFDRKNYNYPDLMKGYQISQYDQPLCGKGFMDINIDGAIRRIGITRIHLEEDVAKLHHESDINGQPYSLLDINRSSIPLMEIVSEPDMRTPEEARQYLMKLRTIMRYLGVSTANMEDGSFRCDANISIRPEGSPELGAKVEVKNMNSFKAVFSALEYEEVRQRKMADEGKKISQETRGWQDDKCQTVSQRSKEFAHDYRYFPEPDLPPLHISCDWIEAIRAKLPELPEVRKERFIQGYWLSEYDASLLTASRELADYFEAVLSEADFQNIPQDKGIKEVANWVVGPVSSIMNTAGADINAFTLKVSPASLCRLLVLVSAGKVNAATAKAVLEDMYSTGQNAETIIEKKGLSQISDSSELVSIAKKVLADNPKAVAEYNEGKTQVIGFLVGQMMKQSKGRANPNIAMELLKKALEEG.

It belongs to the GatB/GatE family. GatB subfamily. Heterotrimer of A, B and C subunits.

The catalysed reaction is L-glutamyl-tRNA(Gln) + L-glutamine + ATP + H2O = L-glutaminyl-tRNA(Gln) + L-glutamate + ADP + phosphate + H(+). The enzyme catalyses L-aspartyl-tRNA(Asn) + L-glutamine + ATP + H2O = L-asparaginyl-tRNA(Asn) + L-glutamate + ADP + phosphate + 2 H(+). Functionally, allows the formation of correctly charged Asn-tRNA(Asn) or Gln-tRNA(Gln) through the transamidation of misacylated Asp-tRNA(Asn) or Glu-tRNA(Gln) in organisms which lack either or both of asparaginyl-tRNA or glutaminyl-tRNA synthetases. The reaction takes place in the presence of glutamine and ATP through an activated phospho-Asp-tRNA(Asn) or phospho-Glu-tRNA(Gln). This is Aspartyl/glutamyl-tRNA(Asn/Gln) amidotransferase subunit B from Dehalococcoides mccartyi (strain ATCC BAA-2266 / KCTC 15142 / 195) (Dehalococcoides ethenogenes (strain 195)).